The sequence spans 246 residues: Proteasome subunit beta type-4 (246 aa).

The propeptide occupies M1–R23. T24 serves as the catalytic Nucleophile.

This sequence belongs to the peptidase T1B family. In terms of assembly, component of the 20S core complex of the 26S proteasome. The 26S proteasome is composed of a core protease (CP), known as the 20S proteasome, capped at one or both ends by the 19S regulatory particle (RP/PA700). The 20S proteasome core is composed of 28 subunits that are arranged in four stacked rings, resulting in a barrel-shaped structure. The two end rings are each formed by seven alpha subunits, and the two central rings are each formed by seven beta subunits. The catalytic chamber with the active sites is on the inside of the barrel. As to expression, ubiquitous low levels, higher expression in siliques and flowers.

The protein localises to the cytoplasm. It localises to the nucleus. Its function is as follows. Non-catalytic component of the proteasome, a multicatalytic proteinase complex which is characterized by its ability to cleave peptides with Arg, Phe, Tyr, Leu, and Glu adjacent to the leaving group at neutral or slightly basic pH. The proteasome has an ATP-dependent proteolytic activity. The chain is Proteasome subunit beta type-4 (PBG1) from Arabidopsis thaliana (Mouse-ear cress).